Consider the following 1388-residue polypeptide: Putative ATP-dependent RNA helicase DHX57 (1388 aa).

Basic residues predominate over residues 1 to 11 (MSSSVRRKGKP). Disordered regions lie at residues 1–107 (MSSS…MTSE) and 121–154 (EQGA…AGQE). The segment covering 34–51 (HGGGGGGGGSCGGGGGGS) has biased composition (gly residues). A compositionally biased stretch (basic and acidic residues) spans 79–89 (DSNKSKGETRP). Phosphoserine is present on residues Ser128 and Ser133. The 46-residue stretch at 175 to 220 (PVPECAVSPLAVQKLSRYGFHTEHCQLALRICDGDLGAALEHLLRQ) folds into the UBA domain. A C3H1-type zinc finger spans residues 299 to 326 (DTSPETCKFYLKGNCKFGSKCKFKHEVP). The residue at position 475 (Ser475) is a Phosphoserine. The region spanning 555–722 (LKLLSKHQVV…FSYCPVITIP (168 aa)) is the Helicase ATP-binding domain. 568–575 (GMTGCGKT) contributes to the ATP binding site. Positions 669-672 (DEVH) match the DEVH box motif. The Helicase C-terminal domain occupies 832–1012 (LIEALLEWIV…QLCLRIKILE (181 aa)).

The protein belongs to the DEAD box helicase family. DEAH subfamily.

The catalysed reaction is ATP + H2O = ADP + phosphate + H(+). Its function is as follows. Probable ATP-binding RNA helicase. The polypeptide is Putative ATP-dependent RNA helicase DHX57 (Dhx57) (Mus musculus (Mouse)).